We begin with the raw amino-acid sequence, 206 residues long: Transcriptional regulator GfcR (206 aa).

The protein belongs to the purine/pyrimidine phosphoribosyltransferase family. GfcR subfamily.

The sequence is that of Transcriptional regulator GfcR from Methanosphaerula palustris (strain ATCC BAA-1556 / DSM 19958 / E1-9c).